A 269-amino-acid polypeptide reads, in one-letter code: Tryptophan synthase alpha chain (269 aa).

Residues Glu-49 and Asp-60 each act as proton acceptor in the active site.

Belongs to the TrpA family. As to quaternary structure, tetramer of two alpha and two beta chains.

The catalysed reaction is (1S,2R)-1-C-(indol-3-yl)glycerol 3-phosphate + L-serine = D-glyceraldehyde 3-phosphate + L-tryptophan + H2O. It participates in amino-acid biosynthesis; L-tryptophan biosynthesis; L-tryptophan from chorismate: step 5/5. Its function is as follows. The alpha subunit is responsible for the aldol cleavage of indoleglycerol phosphate to indole and glyceraldehyde 3-phosphate. In Histophilus somni (strain 2336) (Haemophilus somnus), this protein is Tryptophan synthase alpha chain.